A 347-amino-acid chain; its full sequence is Heat-inducible transcription repressor HrcA (347 aa).

It belongs to the HrcA family.

Its function is as follows. Negative regulator of class I heat shock genes (grpE-dnaK-dnaJ and groELS operons). Prevents heat-shock induction of these operons. The protein is Heat-inducible transcription repressor HrcA of Lactobacillus delbrueckii subsp. bulgaricus (strain ATCC BAA-365 / Lb-18).